A 1042-amino-acid polypeptide reads, in one-letter code: Exosome RNA helicase MTR4 (1042 aa).

Ala2 carries the N-acetylalanine modification. The tract at residues 16 to 74 (DSTTAAGTKKDKEKDKGKWKGPPGSADKAGKRFDGKLQSESTNNGKNKRDVDFEGTDEP) is disordered. The segment covering 23 to 33 (TKKDKEKDKGK) has biased composition (basic and acidic residues). Lys24 is covalently cross-linked (Glycyl lysine isopeptide (Lys-Gly) (interchain with G-Cter in SUMO2)). Ser40 bears the Phosphoserine mark. Basic and acidic residues predominate over residues 43 to 52 (KAGKRFDGKL). Residues Lys51 and Lys78 each carry the N6-acetyllysine modification. ATP-binding positions include Ile139, 161 to 168 (AHTSAGKT), Ser164, Gly166, Lys167, and Thr168. The region spanning 148–304 (IQCVDNNQSV…WICHLHKQPC (157 aa)) is the Helicase ATP-binding domain. The short motif at 252-255 (DEIH) is the DEIH box element. A Glycyl lysine isopeptide (Lys-Gly) (interchain with G-Cter in SUMO2) cross-link involves residue Lys358. The Helicase C-terminal domain occupies 405–577 (QMTKLDFNTD…NMVLNLLRVE (173 aa)). Residues Lys684 and Lys723 each participate in a glycyl lysine isopeptide (Lys-Gly) (interchain with G-Cter in SUMO2) cross-link.

It belongs to the helicase family. SKI2 subfamily. In terms of assembly, component of a TRAMP-like complex, an ATP-dependent exosome regulatory complex consisting of a helicase (MTREX), an oligadenylate polymerase (TENT4B or TENT4A), and a substrate specific RNA-binding factor (ZCCHC7 or ZCCHC8). Several TRAMP-like complexes exist with specific compositions and are associated with nuclear, or nucleolar RNA exosomes. Identified in the spliceosome C complex. Component of the poly(A) tail exosome targeting (PAXT) complex made of PABPN1, ZFC3H1 and MTREX that directs a subset of long and polyadenylated poly(A) RNAs for exosomal degradation. Component of the nuclear exosome targeting (NEXT) complex composed of MTREX, ZCCHC8, and RBM7 that directs a subset of non-coding short-lived RNAs for exosomal degradation. Interacts with ZCCHC8; this interaction bridges the interaction between RBM7 and MTREX. Binds to ZFC3H1 and RBM7 in a RNase-insensitive manner. Interacts with EXOSC10; the interaction mediates the association of MTREX with nuclear RNA exosomes. Interacts with isoform 1 of NVL in an ATP-dependent manner; the interaction is required to associate NVL with nuclear RNA exosome. Interacts with WDR74; the interaction dissociation in a late stage of rRNA synthesis is required for appropriate maturation of pre-60S particles and depends on the ATPase activity of NVL. Interacts with MPHOSPH6. Interacts with the RNA cap-binding complex proteins NCBP1 and SRRT. Interacts with NRDE2; the interaction is direct and negatively regulates MTREX function in exosomal degradation by changing its conformation precluding interaction with ZFC3H1, the RNA cap-binding complex proteins NCBP1 and SRRT, and association with the exosome. Associates with the RNA exosome complex.

Its subcellular location is the nucleus. The protein resides in the nucleoplasm. The protein localises to the nucleolus. It is found in the nucleus speckle. The enzyme catalyses ATP + H2O = ADP + phosphate + H(+). Its activity is regulated as follows. Activated when MTREX is incorporated into NEXT complex an the nuclear RNA exosome complex. Its function is as follows. Catalyzes the ATP-dependent unwinding of RNA duplexes with a single-stranded 3' RNA extension. Central subunit of many protein complexes, namely TRAMP-like, nuclear exosome targeting (NEXT) and poly(A) tail exosome targeting (PAXT). NEXT functions as an RNA exosome cofactor that directs a subset of non-coding short-lived RNAs for exosomal degradation. NEXT is involved in surveillance and turnover of aberrant transcripts and non-coding RNAs. PAXT directs a subset of long and polyadenylated poly(A) RNAs for exosomal degradation. The RNA exosome is fundamental for the degradation of RNA in eukaryotic nuclei. Substrate targeting is facilitated by its cofactor ZCCHC8, which links to RNA-binding protein adapters. Associated with the RNA exosome complex and involved in the 3'-processing of the 7S pre-RNA to the mature 5.8S rRNA. May be involved in pre-mRNA splicing. In the context of NEXT complex can also in vitro unwind DNA:RNA heteroduplexes with a 3' poly (A) RNA tracking strand. Can promote unwinding and degradation of structured RNA substrates when associated with the nuclear exosome and its cofactors. Can displace a DNA strand while translocating on RNA to ultimately degrade the RNA within a DNA/RNA heteroduplex. Plays a role in DNA damage response. The sequence is that of Exosome RNA helicase MTR4 from Homo sapiens (Human).